Reading from the N-terminus, the 601-residue chain is uncharacterized protein (601 aa).

The interval 127–364 is disordered; that stretch reads SSLFSSGSPP…PAFANDDTVH (238 aa). Residues 128 to 137 show a composition bias toward polar residues; it reads SLFSSGSPPD. The segment covering 141 to 154 has biased composition (low complexity); the sequence is RNSTSNLSSVSTNS. Polar residues-rich tracts occupy residues 159-177, 199-213, and 232-250; these read TIGS…ASQR, ALSS…NVTP, and SATN…SPSQ. Serine 247 and serine 281 each carry phosphoserine. Residues 265–281 show a composition bias toward low complexity; it reads SLSSSPSSEDSDLSLSS. Basic and acidic residues-rich tracts occupy residues 286–296 and 313–325; these read DEKKQPSKSEK and GSKE…KEKA. A Phosphoserine modification is found at serine 335. Polar residues predominate over residues 338 to 356; that stretch reads DTSTEYDSNSLRRSRSNPA.

This is an uncharacterized protein from Schizosaccharomyces pombe (strain 972 / ATCC 24843) (Fission yeast).